The primary structure comprises 274 residues: 2,3,4,5-tetrahydropyridine-2,6-dicarboxylate N-succinyltransferase (274 aa).

2 residues coordinate substrate: arginine 104 and aspartate 141.

It belongs to the transferase hexapeptide repeat family. As to quaternary structure, homotrimer.

The protein resides in the cytoplasm. It carries out the reaction (S)-2,3,4,5-tetrahydrodipicolinate + succinyl-CoA + H2O = (S)-2-succinylamino-6-oxoheptanedioate + CoA. Its pathway is amino-acid biosynthesis; L-lysine biosynthesis via DAP pathway; LL-2,6-diaminopimelate from (S)-tetrahydrodipicolinate (succinylase route): step 1/3. This Shewanella baltica (strain OS155 / ATCC BAA-1091) protein is 2,3,4,5-tetrahydropyridine-2,6-dicarboxylate N-succinyltransferase.